The following is a 2221-amino-acid chain: RNA-directed RNA polymerase L (2221 aa).

An endonuclease region spans residues 29–292; sequence KTVLLSQVNF…SERETLIEAE (264 aa). Mn(2+) is bound by residues E54, D91, and E104. K117 is a catalytic residue. The RdRp catalytic domain occupies 1171–1369; the sequence is LDMKSVVRLS…YLSSKLNKFI (199 aa). D1327 serves as a coordination point for Mg(2+).

The protein belongs to the Bunyavirales RNA polymerase family. In terms of assembly, homomultimer; the oligomeric structure is essential for the polymerase activity. Interacts with nucleoprotein N. Interacts with protein Z; this interaction inhibits viral transcription and replication, Z partially blocks the product exit tunnel for the releasing nascent RNA product. The cofactor is Mn(2+). It depends on Mg(2+) as a cofactor.

The protein localises to the virion. The protein resides in the host cytoplasm. The enzyme catalyses RNA(n) + a ribonucleoside 5'-triphosphate = RNA(n+1) + diphosphate. RNA-dependent RNA polymerase, which is responsible for the replication and transcription of the viral RNA genome using antigenomic RNA as an intermediate. During transcription, synthesizes subgenomic RNAs and assures their capping by a cap-snatching mechanism, which involves the endonuclease activity cleaving the host capped pre-mRNAs. These short capped RNAs are then used as primers for viral transcription. The 3'-end of subgenomic mRNAs molecules are heterogeneous and not polyadenylated. The replicase function is to direct synthesis of antigenomic and genomic RNA which are encapsidated and non capped. As a consequence of the use of the same enzyme for both transcription and replication, these mechanisms need to be well coordinated. These processes may be regulated by proteins N and Z in a dose-dependent manner. Z protein inhibits the viral polymerase L und thus the viral transcription and RNA synthesis. The chain is RNA-directed RNA polymerase L from Sigmodon hispidus (Hispid cotton rat).